Reading from the N-terminus, the 292-residue chain is Protein/nucleic acid deglycase HchA (292 aa).

Residues 1–12 (MSQDVNELSKQP) are compositionally biased toward polar residues. The segment at 1-23 (MSQDVNELSKQPTPDKAEDNAFF) is disordered. Residue Cys190 is the Nucleophile of the active site.

Belongs to the peptidase C56 family. HchA subfamily.

It is found in the cytoplasm. The catalysed reaction is N(omega)-(1-hydroxy-2-oxopropyl)-L-arginyl-[protein] + H2O = lactate + L-arginyl-[protein] + H(+). The enzyme catalyses N(6)-(1-hydroxy-2-oxopropyl)-L-lysyl-[protein] + H2O = lactate + L-lysyl-[protein] + H(+). It carries out the reaction S-(1-hydroxy-2-oxopropyl)-L-cysteinyl-[protein] + H2O = lactate + L-cysteinyl-[protein] + H(+). It catalyses the reaction N(omega)-(1-hydroxy-2-oxoethyl)-L-arginyl-[protein] + H2O = L-arginyl-[protein] + glycolate + H(+). The catalysed reaction is N(6)-(1-hydroxy-2-oxoethyl)-L-lysyl-[protein] + H2O = glycolate + L-lysyl-[protein] + H(+). The enzyme catalyses S-(1-hydroxy-2-oxoethyl)-L-cysteinyl-[protein] + H2O = glycolate + L-cysteinyl-[protein] + H(+). It carries out the reaction N(2)-(1-hydroxy-2-oxopropyl)-dGTP + H2O = lactate + dGTP + H(+). It catalyses the reaction N(2)-(1-hydroxy-2-oxopropyl)-GTP + H2O = lactate + GTP + H(+). The catalysed reaction is N(2)-(1-hydroxy-2-oxopropyl)-GDP + H2O = lactate + GDP + H(+). The enzyme catalyses N(2)-(1-hydroxy-2-oxopropyl)-GMP + H2O = lactate + GMP + H(+). It carries out the reaction N(2)-(1-hydroxy-2-oxoethyl)-dGTP + H2O = dGTP + glycolate + H(+). It catalyses the reaction N(2)-(1-hydroxy-2-oxoethyl)-GTP + H2O = glycolate + GTP + H(+). The catalysed reaction is N(2)-(1-hydroxy-2-oxoethyl)-GDP + H2O = glycolate + GDP + H(+). The enzyme catalyses N(2)-(1-hydroxy-2-oxoethyl)-GMP + H2O = glycolate + GMP + H(+). It carries out the reaction an N(2)-(1-hydroxy-2-oxopropyl)-guanosine in RNA + H2O = a guanosine in RNA + lactate + H(+). It catalyses the reaction an N(2)-(1-hydroxy-2-oxopropyl)-2'-deoxyguanosine in DNA + H2O = a 2'-deoxyguanosine in DNA + lactate + H(+). The catalysed reaction is an N(2)-(1-hydroxy-2-oxoethyl)-guanosine in RNA + H2O = a guanosine in RNA + glycolate + H(+). The enzyme catalyses an N(2)-(1-hydroxy-2-oxoethyl)-2'-deoxyguanosine in DNA + H2O = a 2'-deoxyguanosine in DNA + glycolate + H(+). Its function is as follows. Protein and nucleotide deglycase that catalyzes the deglycation of the Maillard adducts formed between amino groups of proteins or nucleotides and reactive carbonyl groups of glyoxals. Thus, functions as a protein deglycase that repairs methylglyoxal- and glyoxal-glycated proteins, and releases repaired proteins and lactate or glycolate, respectively. Deglycates cysteine, arginine and lysine residues in proteins, and thus reactivates these proteins by reversing glycation by glyoxals. Acts on early glycation intermediates (hemithioacetals and aminocarbinols), preventing the formation of Schiff bases and advanced glycation endproducts (AGE). Also functions as a nucleotide deglycase able to repair glycated guanine in the free nucleotide pool (GTP, GDP, GMP, dGTP) and in DNA and RNA. Is thus involved in a major nucleotide repair system named guanine glycation repair (GG repair), dedicated to reversing methylglyoxal and glyoxal damage via nucleotide sanitization and direct nucleic acid repair. Plays an important role in protecting cells from carbonyl stress. The chain is Protein/nucleic acid deglycase HchA from Staphylococcus aureus (strain Newman).